Reading from the N-terminus, the 416-residue chain is Tyrosine--tRNA ligase (416 aa).

Tyr34 contacts L-tyrosine. The short motif at Pro39–His48 is the 'HIGH' region element. The L-tyrosine site is built by Tyr165 and Gln169. A 'KMSKS' region motif is present at residues Lys227–Thr231. Lys230 is a binding site for ATP. The 68-residue stretch at Glu349 to Lys416 folds into the S4 RNA-binding domain.

The protein belongs to the class-I aminoacyl-tRNA synthetase family. TyrS type 1 subfamily. As to quaternary structure, homodimer.

The protein localises to the cytoplasm. It carries out the reaction tRNA(Tyr) + L-tyrosine + ATP = L-tyrosyl-tRNA(Tyr) + AMP + diphosphate + H(+). Catalyzes the attachment of tyrosine to tRNA(Tyr) in a two-step reaction: tyrosine is first activated by ATP to form Tyr-AMP and then transferred to the acceptor end of tRNA(Tyr). This Limosilactobacillus reuteri (strain DSM 20016) (Lactobacillus reuteri) protein is Tyrosine--tRNA ligase.